Consider the following 740-residue polypeptide: Ion-translocating oxidoreductase complex subunit C (740 aa).

4Fe-4S ferredoxin-type domains lie at 369 to 397 (GEPQ…QQLY) and 407 to 436 (KATT…VQYF). The [4Fe-4S] cluster site is built by cysteine 377, cysteine 380, cysteine 383, cysteine 387, cysteine 416, cysteine 419, cysteine 422, and cysteine 426. Residues 598–716 (AKARKLEQQQ…EPEEQVDPRK (119 aa)) form a disordered region.

This sequence belongs to the 4Fe4S bacterial-type ferredoxin family. RnfC subfamily. As to quaternary structure, the complex is composed of six subunits: RsxA, RsxB, RsxC, RsxD, RsxE and RsxG. The cofactor is [4Fe-4S] cluster.

The protein resides in the cell inner membrane. Part of a membrane-bound complex that couples electron transfer with translocation of ions across the membrane. Required to maintain the reduced state of SoxR. The chain is Ion-translocating oxidoreductase complex subunit C from Shigella flexneri serotype 5b (strain 8401).